We begin with the raw amino-acid sequence, 67 residues long: Protein SlyX homolog (67 aa).

The span at 48–60 (TSAPSTAAESNPQ) shows a compositional bias: polar residues. The disordered stretch occupies residues 48-67 (TSAPSTAAESNPQHEIPPHY).

Belongs to the SlyX family.

This Cupriavidus pinatubonensis (strain JMP 134 / LMG 1197) (Cupriavidus necator (strain JMP 134)) protein is Protein SlyX homolog.